The following is a 284-amino-acid chain: Four and a half LIM domains protein 5 (284 aa).

Residues Cys-8–Cys-32 form a C4-type zinc finger. 3 LIM zinc-binding domains span residues Asn-39–Ser-100, Lys-101–Ala-160, and His-161–Lys-220.

Interacts with CREM (via the third LIM domain). Interacts (via second LIM domain) with SPAG8. In terms of tissue distribution, testis-specific, temporal expression is coordinated with CREM.

Its subcellular location is the nucleus. Its function is as follows. May be involved in the regulation of spermatogenesis. Stimulates CREM transcriptional activity in a phosphorylation-independent manner. This chain is Four and a half LIM domains protein 5 (Fhl5), found in Mus musculus (Mouse).